A 393-amino-acid chain; its full sequence is Putative F-box/kelch-repeat protein At1g32430 (393 aa).

Residues 1-47 form the F-box domain; it reads MANKEKLPWDLEEEILSRVPPTSLDRFKTVCKRWNALFNDKTFINNH. Kelch repeat units follow at residues 151 to 199 and 308 to 357; these read YMKD…NLSV and WIYV…QVQF.

The sequence is that of Putative F-box/kelch-repeat protein At1g32430 from Arabidopsis thaliana (Mouse-ear cress).